Here is a 1342-residue protein sequence, read N- to C-terminus: DNA-directed RNA polymerase subunit beta (1342 aa).

It belongs to the RNA polymerase beta chain family. As to quaternary structure, the RNAP catalytic core consists of 2 alpha, 1 beta, 1 beta' and 1 omega subunit. When a sigma factor is associated with the core the holoenzyme is formed, which can initiate transcription.

It catalyses the reaction RNA(n) + a ribonucleoside 5'-triphosphate = RNA(n+1) + diphosphate. Functionally, DNA-dependent RNA polymerase catalyzes the transcription of DNA into RNA using the four ribonucleoside triphosphates as substrates. This Wigglesworthia glossinidia brevipalpis protein is DNA-directed RNA polymerase subunit beta.